Reading from the N-terminus, the 233-residue chain is B-cell lymphoma/leukemia 10 (233 aa).

The residue at position 1 (Met-1) is an N-acetylmethionine. The CARD domain occupies 13–101; sequence LTEVKKDALE…QNFLIQKITD (89 aa). Residues Lys-17, Lys-31, and Lys-63 each participate in a glycyl lysine isopeptide (Lys-Gly) (interchain with G-Cter in ubiquitin) cross-link. Polar residues predominate over residues 130 to 141; sequence TNNLSRSNSDES. 2 disordered regions span residues 130-149 and 186-233; these read TNNL…KQRP and SFSS…LSRQ. Ser-138 carries the post-translational modification Phosphoserine. A compositionally biased stretch (pro residues) spans 195–205; that stretch reads PGDPGAPPLPP.

In terms of assembly, homomultimer; homooligomerized following recruitment by CARD domain-containing proteins that form a nucleating helical template that recruits BCL10 via CARD-CARD interaction. Self-associates by CARD-CARD interaction and interacts with other CARD-proteins such as CARD9, CARD10, CARD11 and CARD14. Forms a complex with CARD14 and MALT1; resulting in the formation of a CBM (CARD14-BCL10-MALT1) complex. Forms a complex with CARD11 and MALT1; resulting in the formation of a CBM (CARD11-BCL10-MALT1) complex. Forms a complex with CARD9 and MALT1; resulting in the formation of a CBM (CARD9-BCL10-MALT1) complex. Found in a membrane raft complex, at least composed of BCL10, CARD11, DPP4 and IKBKB. Binds caspase-9 with its C-terminal domain. Interacts with TRAF2 and BIRC2/c-IAP2. Interacts with PELI2 and SOCS3; these interactions may be mutually exclusive. Post-translationally, phosphorylated. Phosphorylation results in dissociation from TRAF2 and binding to BIRC2/c-IAP2. Phosphorylated by IKBKB/IKKB. In terms of processing, ubiquitinated via both 'Lys-63'-linked and linear ('Met-1'-linked) polyubiquitin chains in response to T-cell receptor (TCR) activation. Ubiquitination is recognized by IKBKG/NEMO, the regulatory subunit of I-kappa-B kinase (IKK), and is required for TCR-induced NF-kappa-B activation. Linear ubiquitination at Lys-17, Lys-31 and Lys-63 is mediated by RNF31/HOIP; linear ubiquitination is recognized with much higher affinity than 'Lys-63'-linked ubiquitin by IKBKG/NEMO. CARD11 is required for linear ubiquitination by HOIP by promoting the targeting of BCL10 to RNF31/HOIP. Proteolytically cleaved by MALT1; required for T-cell activation.

The protein resides in the cytoplasm. It is found in the perinuclear region. Its subcellular location is the membrane raft. Functionally, plays a key role in both adaptive and innate immune signaling by bridging CARD domain-containing proteins to immune activation. Acts by channeling adaptive and innate immune signaling downstream of CARD domain-containing proteins CARD9, CARD11 and CARD14 to activate NF-kappa-B and MAP kinase p38 (MAPK11, MAPK12, MAPK13 and/or MAPK14) pathways which stimulate expression of genes encoding pro-inflammatory cytokines and chemokines. Recruited by activated CARD domain-containing proteins: homooligomerized CARD domain-containing proteins form a nucleating helical template that recruits BCL10 via CARD-CARD interaction, thereby promoting polymerization of BCL10, subsequent recruitment of MALT1 and formation of a CBM complex. This leads to activation of NF-kappa-B and MAP kinase p38 (MAPK11, MAPK12, MAPK13 and/or MAPK14) pathways which stimulate expression of genes encoding pro-inflammatory cytokines and chemokines. Activated by CARD9 downstream of C-type lectin receptors; CARD9-mediated signals are essential for antifungal immunity. Activated by CARD11 downstream of T-cell receptor (TCR) and B-cell receptor (BCR). Promotes apoptosis, pro-caspase-9 maturation and activation of NF-kappa-B via NIK and IKK. The chain is B-cell lymphoma/leukemia 10 from Rattus norvegicus (Rat).